The primary structure comprises 159 residues: Ribosomal RNA large subunit methyltransferase H (159 aa).

S-adenosyl-L-methionine is bound by residues leucine 76, glycine 108, and phenylalanine 127–phenylalanine 132.

Belongs to the RNA methyltransferase RlmH family. As to quaternary structure, homodimer.

It is found in the cytoplasm. The enzyme catalyses pseudouridine(1915) in 23S rRNA + S-adenosyl-L-methionine = N(3)-methylpseudouridine(1915) in 23S rRNA + S-adenosyl-L-homocysteine + H(+). Specifically methylates the pseudouridine at position 1915 (m3Psi1915) in 23S rRNA. In Clostridium botulinum (strain 657 / Type Ba4), this protein is Ribosomal RNA large subunit methyltransferase H.